Reading from the N-terminus, the 296-residue chain is Urease accessory protein UreD (296 aa).

The protein belongs to the UreD family. UreD, UreF and UreG form a complex that acts as a GTP-hydrolysis-dependent molecular chaperone, activating the urease apoprotein by helping to assemble the nickel containing metallocenter of UreC. The UreE protein probably delivers the nickel.

The protein resides in the cytoplasm. Functionally, required for maturation of urease via the functional incorporation of the urease nickel metallocenter. The chain is Urease accessory protein UreD from Janthinobacterium sp. (strain Marseille) (Minibacterium massiliensis).